The chain runs to 529 residues: Peptide chain release factor 3 (529 aa).

One can recognise a tr-type G domain in the interval 11–280 (AKRRTFAIIS…GLVAWAPAPM (270 aa)). Residues 20 to 27 (SHPDAGKT), 88 to 92 (DTPGH), and 142 to 145 (NKLD) contribute to the GTP site.

The protein belongs to the TRAFAC class translation factor GTPase superfamily. Classic translation factor GTPase family. PrfC subfamily.

Its subcellular location is the cytoplasm. Its function is as follows. Increases the formation of ribosomal termination complexes and stimulates activities of RF-1 and RF-2. It binds guanine nucleotides and has strong preference for UGA stop codons. It may interact directly with the ribosome. The stimulation of RF-1 and RF-2 is significantly reduced by GTP and GDP, but not by GMP. The polypeptide is Peptide chain release factor 3 (Salmonella agona (strain SL483)).